Reading from the N-terminus, the 386-residue chain is DNase toxin Tse7 (386 aa).

Interacts with Tsi7.

The catalysed reaction is Endonucleolytic cleavage to 5'-phosphodinucleotide and 5'-phosphooligonucleotide end-products.. Type VI secretion exported toxin that via to its DNase activity induces growth arrest and ultimately DNA degradation within target cell. The activity is initially neutralized by a cognate immunity protein Tsi7. This is DNase toxin Tse7 from Pseudomonas aeruginosa (strain ATCC 15692 / DSM 22644 / CIP 104116 / JCM 14847 / LMG 12228 / 1C / PRS 101 / PAO1).